We begin with the raw amino-acid sequence, 246 residues long: Ribonuclease PH (246 aa).

Phosphate-binding positions include Arg91 and 129 to 131 (GTR).

This sequence belongs to the RNase PH family. Homohexameric ring arranged as a trimer of dimers.

The enzyme catalyses tRNA(n+1) + phosphate = tRNA(n) + a ribonucleoside 5'-diphosphate. Functionally, phosphorolytic 3'-5' exoribonuclease that plays an important role in tRNA 3'-end maturation. Removes nucleotide residues following the 3'-CCA terminus of tRNAs; can also add nucleotides to the ends of RNA molecules by using nucleoside diphosphates as substrates, but this may not be physiologically important. Probably plays a role in initiation of 16S rRNA degradation (leading to ribosome degradation) during starvation. The chain is Ribonuclease PH from Paraburkholderia xenovorans (strain LB400).